A 501-amino-acid polypeptide reads, in one-letter code: Glycerol kinase (501 aa).

Position 14 (Thr14) interacts with ADP. 3 residues coordinate ATP: Thr14, Thr15, and Ser16. Residue Thr14 participates in sn-glycerol 3-phosphate binding. Arg18 is an ADP binding site. Sn-glycerol 3-phosphate-binding residues include Arg84, Glu85, Tyr136, and Asp246. Glycerol-binding residues include Arg84, Glu85, Tyr136, Asp246, and Gln247. ADP contacts are provided by Thr268 and Gly311. ATP is bound by residues Thr268, Gly311, Gln315, and Gly412. ADP-binding residues include Gly412 and Asn416.

This sequence belongs to the FGGY kinase family. As to quaternary structure, homotetramer and homodimer (in equilibrium).

The catalysed reaction is glycerol + ATP = sn-glycerol 3-phosphate + ADP + H(+). Its pathway is polyol metabolism; glycerol degradation via glycerol kinase pathway; sn-glycerol 3-phosphate from glycerol: step 1/1. Its activity is regulated as follows. Activated by phosphorylation and inhibited by fructose 1,6-bisphosphate (FBP). In terms of biological role, key enzyme in the regulation of glycerol uptake and metabolism. Catalyzes the phosphorylation of glycerol to yield sn-glycerol 3-phosphate. The sequence is that of Glycerol kinase from Desulforamulus reducens (strain ATCC BAA-1160 / DSM 100696 / MI-1) (Desulfotomaculum reducens).